We begin with the raw amino-acid sequence, 294 residues long: HTH-type transcriptional regulator XapR (294 aa).

The region spanning 7-64 (TDLKLLRYFLAVAEELHFGRAAARLNMSQPPLSIHIKELENQLGTQLFIRHSRSVVLT) is the HTH lysR-type domain. Residues 24–43 (FGRAAARLNMSQPPLSIHIK) constitute a DNA-binding region (H-T-H motif).

It belongs to the LysR transcriptional regulatory family.

In terms of biological role, positive regulator required for the expression of xapA and xapB. Binds to the inducer xanthosine. The sequence is that of HTH-type transcriptional regulator XapR (xapR) from Escherichia coli (strain K12).